A 141-amino-acid chain; its full sequence is Nucleoside diphosphate kinase (141 aa).

ATP contacts are provided by Lys-11, Phe-59, Arg-87, Thr-93, Arg-104, and Asn-114. His-117 (pros-phosphohistidine intermediate) is an active-site residue.

Belongs to the NDK family. In terms of assembly, homotetramer. Requires Mg(2+) as cofactor.

The protein localises to the cytoplasm. The catalysed reaction is a 2'-deoxyribonucleoside 5'-diphosphate + ATP = a 2'-deoxyribonucleoside 5'-triphosphate + ADP. It carries out the reaction a ribonucleoside 5'-diphosphate + ATP = a ribonucleoside 5'-triphosphate + ADP. In terms of biological role, major role in the synthesis of nucleoside triphosphates other than ATP. The ATP gamma phosphate is transferred to the NDP beta phosphate via a ping-pong mechanism, using a phosphorylated active-site intermediate. The chain is Nucleoside diphosphate kinase from Nitrosomonas europaea (strain ATCC 19718 / CIP 103999 / KCTC 2705 / NBRC 14298).